A 363-amino-acid chain; its full sequence is tRNA-specific 2-thiouridylase MnmA (363 aa).

ATP is bound by residues 8 to 15 (AMSGGVDS) and Leu34. Residue Cys103 is the Nucleophile of the active site. A disulfide bridge connects residues Cys103 and Cys195. Residue Gly127 participates in ATP binding. The interval 145–147 (KDQ) is interaction with tRNA. Catalysis depends on Cys195, which acts as the Cysteine persulfide intermediate.

The protein belongs to the MnmA/TRMU family.

It localises to the cytoplasm. It catalyses the reaction S-sulfanyl-L-cysteinyl-[protein] + uridine(34) in tRNA + AH2 + ATP = 2-thiouridine(34) in tRNA + L-cysteinyl-[protein] + A + AMP + diphosphate + H(+). Functionally, catalyzes the 2-thiolation of uridine at the wobble position (U34) of tRNA, leading to the formation of s(2)U34. The chain is tRNA-specific 2-thiouridylase MnmA from Thermobifida fusca (strain YX).